The chain runs to 208 residues: MNYPNGKPYRKNSAIDGGKKTAAFSNIEYGGRGMSLEKDIEHSNAFYLKSDIAVIHKKPTPVQIVNVNYPKRSKAVINEAYFRTPSTTDYNGVYQGYYIDFEAKETKNKTSFPLNNIHDHQVEHMKNAYQQKGIVFLMIRFKTLDEVYLLPYSKFEIFWKRYKDNIKKSITVDEIRKNGYHIPYQYQPRLDYLKAVDKLILDESEDRV.

Residues T87, D89, E102, and Q121 each coordinate Mg(2+).

The protein belongs to the RecU family. The cofactor is Mg(2+).

It localises to the cytoplasm. It carries out the reaction Endonucleolytic cleavage at a junction such as a reciprocal single-stranded crossover between two homologous DNA duplexes (Holliday junction).. Its function is as follows. Endonuclease that resolves Holliday junction intermediates in genetic recombination. Cleaves mobile four-strand junctions by introducing symmetrical nicks in paired strands. Promotes annealing of linear ssDNA with homologous dsDNA. Required for DNA repair, homologous recombination and chromosome segregation. The protein is Holliday junction resolvase RecU of Staphylococcus aureus (strain MRSA252).